Reading from the N-terminus, the 262-residue chain is Phosphonates import ATP-binding protein PhnC (262 aa).

Residues 5-253 (IRVEKLAKTF…RFDHLYRSIN (249 aa)) enclose the ABC transporter domain. Residue 37–44 (GPSGSGKS) participates in ATP binding.

Belongs to the ABC transporter superfamily. Phosphonates importer (TC 3.A.1.9.1) family. The complex is composed of two ATP-binding proteins (PhnC), two transmembrane proteins (PhnE) and a solute-binding protein (PhnD).

It localises to the cell inner membrane. The enzyme catalyses phosphonate(out) + ATP + H2O = phosphonate(in) + ADP + phosphate + H(+). In terms of biological role, part of the ABC transporter complex PhnCDE involved in phosphonates, phosphate esters, phosphite and phosphate import. Responsible for energy coupling to the transport system. The sequence is that of Phosphonates import ATP-binding protein PhnC from Escherichia coli (strain K12).